The following is a 359-amino-acid chain: Transcription factor MYB115 (359 aa).

Polar residues predominate over residues 1-17; sequence MYHQNLISSTPNQNSNP. The disordered stretch occupies residues 1 to 21; sequence MYHQNLISSTPNQNSNPHDWD. HTH myb-type domains follow at residues 153 to 208 and 209 to 259; these read KDII…RPNI and KKND…RRLH. 2 consecutive DNA-binding regions (H-T-H motif) follow at residues 181 to 204 and 232 to 255; these read WTSI…HNHL and WTEI…NATK.

Accumulates in reproductive organs (e.g. flowers and siliques). Expressed at very low levels in vegetative organs.

The protein resides in the nucleus. Transcription activator that recognizes the motif 5'-TAACGG-3' in the promoter of target genes. Promotes vegetative-to-embryonic transition and the formation of somatic embryos from root explants in a WUS-independent manner. Together with MYB118, activates the transcription of S-ACP-DES2/AAD2 and S-ACP-DES3/AAD3 thus promoting the biosynthesis of omega-7 monounsaturated fatty acid in seed endosperm. The chain is Transcription factor MYB115 from Arabidopsis thaliana (Mouse-ear cress).